We begin with the raw amino-acid sequence, 230 residues long: Large ribosomal subunit protein uL1 (230 aa).

This sequence belongs to the universal ribosomal protein uL1 family. In terms of assembly, part of the 50S ribosomal subunit.

Its function is as follows. Binds directly to 23S rRNA. The L1 stalk is quite mobile in the ribosome, and is involved in E site tRNA release. Protein L1 is also a translational repressor protein, it controls the translation of the L11 operon by binding to its mRNA. The polypeptide is Large ribosomal subunit protein uL1 (Ligilactobacillus salivarius (strain UCC118) (Lactobacillus salivarius)).